A 334-amino-acid chain; its full sequence is N-acetyl-gamma-glutamyl-phosphate reductase (334 aa).

Cys-154 is an active-site residue.

The protein belongs to the NAGSA dehydrogenase family. Type 1 subfamily.

It localises to the cytoplasm. The enzyme catalyses N-acetyl-L-glutamate 5-semialdehyde + phosphate + NADP(+) = N-acetyl-L-glutamyl 5-phosphate + NADPH + H(+). It functions in the pathway amino-acid biosynthesis; L-arginine biosynthesis; N(2)-acetyl-L-ornithine from L-glutamate: step 3/4. Functionally, catalyzes the NADPH-dependent reduction of N-acetyl-5-glutamyl phosphate to yield N-acetyl-L-glutamate 5-semialdehyde. The protein is N-acetyl-gamma-glutamyl-phosphate reductase of Escherichia coli (strain K12).